The sequence spans 365 residues: Synapse-associated protein 1 (365 aa).

Positions 1 to 65 (MFGGLSSWLG…QPPTEDPQFL (65 aa)) are disordered. A compositionally biased stretch (low complexity) spans 52–62 (EQQQQPPTEDP). Positions 172-224 (VQFNFDFDQMYPVALVMLQEDELLSKMRFALVPKLVKEEVFWRNYFYRISLIK) constitute a BSD domain. The disordered stretch occupies residues 237 to 259 (QASGKEEKSSNRDDNLPLTEAVR). Residues 240–251 (GKEEKSSNRDDN) show a composition bias toward basic and acidic residues. Position 262 is a phosphothreonine (threonine 262). Phosphoserine occurs at positions 283, 298, and 327. The tract at residues 344-365 (VAESEKRDENWDKEIEKMLQES) is disordered. Residues 346–365 (ESEKRDENWDKEIEKMLQES) show a composition bias toward basic and acidic residues.

As to quaternary structure, interacts (via phosphorylated form and BSD domain) with AKT1; this interaction is enhanced in a mTORC2-mediated manner in response to epidermal growth factor (EGF) stimulation and activates AKT1. Post-translationally, phosphorylated. Phosphorylation increases in a mTORC2-mediated manner in response to epidermal growth factor (EGF) stimulation. As to expression, expressed in the liver, kidney, skeletal muscle and in white and brown adipose tissues. Expressed in the cortex, cerebellum, thalamus, hippocampus, braistem, olfactory bulb, spinal cord and striatum of the brain. Expressed in most neuropil regions containing glutamatergic synaptic terminals. Expressed in the CA1, CA2 and CA3 perikarya of the hippocampus. Expressed in neurons and Purkinje cells (at the protein level).

It is found in the cytoplasm. The protein localises to the perinuclear region. The protein resides in the golgi apparatus. Its subcellular location is the perikaryon. It localises to the cell projection. It is found in the axon. The protein localises to the dendrite. The protein resides in the growth cone. Its subcellular location is the presynaptic cell membrane. It localises to the postsynaptic cell membrane. It is found in the membrane. Its function is as follows. Plays a role in adipocyte differentiation by promoting mTORC2-mediated phosphorylation of AKT1 at 'Ser-473' after growth factor stimulation. This chain is Synapse-associated protein 1, found in Mus musculus (Mouse).